We begin with the raw amino-acid sequence, 820 residues long: Trimethylamine-N-oxide reductase (820 aa).

The segment at residues 1 to 33 (MAITRRSFLKGVATTSAASVIGPSLLASASANA) is a signal peptide (tat-type signal). Ser-179 contacts Mo-bis(molybdopterin guanine dinucleotide).

It belongs to the prokaryotic molybdopterin-containing oxidoreductase family. Mo-bis(molybdopterin guanine dinucleotide) is required as a cofactor. Post-translationally, predicted to be exported by the Tat system. The position of the signal peptide cleavage has not been experimentally proven.

It localises to the periplasm. It carries out the reaction trimethylamine + 2 Fe(III)-[cytochrome c] + H2O = trimethylamine N-oxide + 2 Fe(II)-[cytochrome c] + 3 H(+). Reduces trimethylamine-N-oxide (TMAO) into trimethylamine; an anaerobic reaction coupled to energy-yielding reactions. In Vibrio parahaemolyticus serotype O3:K6 (strain RIMD 2210633), this protein is Trimethylamine-N-oxide reductase (torA).